A 190-amino-acid chain; its full sequence is Threonylcarbamoyl-AMP synthase (190 aa).

The YrdC-like domain maps to 7 to 190 (RDAIAAAIDV…ALTGELFRQG (184 aa)).

It belongs to the SUA5 family. TsaC subfamily.

The protein resides in the cytoplasm. It catalyses the reaction L-threonine + hydrogencarbonate + ATP = L-threonylcarbamoyladenylate + diphosphate + H2O. Required for the formation of a threonylcarbamoyl group on adenosine at position 37 (t(6)A37) in tRNAs that read codons beginning with adenine. Catalyzes the conversion of L-threonine, HCO(3)(-)/CO(2) and ATP to give threonylcarbamoyl-AMP (TC-AMP) as the acyladenylate intermediate, with the release of diphosphate. This chain is Threonylcarbamoyl-AMP synthase, found in Escherichia coli O9:H4 (strain HS).